A 358-amino-acid polypeptide reads, in one-letter code: Trans-anol O-methyltransferase 1 (358 aa).

G201, D224, D244, M245, and R259 together coordinate S-adenosyl-L-methionine. Residue H262 is the Proton acceptor of the active site.

The protein belongs to the class I-like SAM-binding methyltransferase superfamily. Cation-independent O-methyltransferase family. COMT subfamily. As to expression, highly expressed in developing fruits. Expressed at low levels in roots, young leaves, buds and flowers.

The enzyme catalyses (E)-anol + S-adenosyl-L-methionine = (E)-anethole + S-adenosyl-L-homocysteine + H(+). It carries out the reaction (E)-isoeugenol + S-adenosyl-L-methionine = (E)-isomethyleugenol + S-adenosyl-L-homocysteine + H(+). It participates in aromatic compound metabolism; phenylpropanoid biosynthesis. With respect to regulation, inhibited by zinc and copper. In terms of biological role, phenylpropene O-methyltransferase that catalyzes the conversion of trans-anol to trans-anethole and isoeugenol to isomethyleugenol. Phenylpropenes are the primary constituents of various essential plant oils. They are produced as antimicrobial and antianimal compounds, or as floral attractants of pollinators. In Pimpinella anisum (Anise), this protein is Trans-anol O-methyltransferase 1 (AIMT1).